We begin with the raw amino-acid sequence, 160 residues long: S-ribosylhomocysteine lyase (160 aa).

His57, His61, and Cys127 together coordinate Fe cation.

This sequence belongs to the LuxS family. In terms of assembly, homodimer. Fe cation serves as cofactor.

The enzyme catalyses S-(5-deoxy-D-ribos-5-yl)-L-homocysteine = (S)-4,5-dihydroxypentane-2,3-dione + L-homocysteine. Functionally, involved in the synthesis of autoinducer 2 (AI-2) which is secreted by bacteria and is used to communicate both the cell density and the metabolic potential of the environment. The regulation of gene expression in response to changes in cell density is called quorum sensing. Catalyzes the transformation of S-ribosylhomocysteine (RHC) to homocysteine (HC) and 4,5-dihydroxy-2,3-pentadione (DPD). The chain is S-ribosylhomocysteine lyase from Streptococcus pyogenes serotype M2 (strain MGAS10270).